The primary structure comprises 978 residues: Tyrosine-protein kinase transforming protein fms (978 aa).

The Extracellular portion of the chain corresponds to 1–543 (RMPSGPGHYG…IGAHTPLPDE (543 aa)). Ig-like C2-type domains are found at residues 55 to 134 (PVIQ…IHLY), 141 to 231 (PWKV…KVQK), 236 to 331 (PATL…RVVE), 333 to 431 (AYSN…LTLR), and 434 to 533 (PEVR…WPIS). A disulfide bridge connects residues Cys-76 and Cys-118. N-linked (GlcNAc...) asparagine; by host glycans are attached at residues Asn-79, Asn-107, Asn-128, Asn-187, Asn-309, Asn-320, Asn-336, Asn-369, Asn-444, Asn-511, and Asn-524. Intrachain disulfides connect Cys-161/Cys-211 and Cys-258/Cys-312. Cysteines 451 and 516 form a disulfide. A helical transmembrane segment spans residues 544-568 (LLFTPVLLTCMSIMALLLLLLLLLL). Over 569-978 (YKYKQKPKYQ…PWQRTPPVAR (410 aa)) the chain is Cytoplasmic. Residues 613–942 (LQFGKTLGTG…PTFQQICSLL (330 aa)) enclose the Protein kinase domain. Residues 619–627 (LGTGAFGKV) and Lys-647 each bind ATP. Asp-810 functions as the Proton acceptor in the catalytic mechanism. Tyr-841 is modified (phosphotyrosine; by autocatalysis). The segment at 952–978 (VPNYTNLPSSSSSRLLRPWQRTPPVAR) is disordered. Residues 958–969 (LPSSSSSRLLRP) show a composition bias toward low complexity. The residue at position 973 (Thr-973) is a Phosphothreonine.

This sequence belongs to the protein kinase superfamily. Tyr protein kinase family. CSF-1/PDGF receptor subfamily.

The protein resides in the membrane. It carries out the reaction L-tyrosyl-[protein] + ATP = O-phospho-L-tyrosyl-[protein] + ADP + H(+). Truncated version of the receptor for colony-stimulating factor 1 (CSF-1). This is Tyrosine-protein kinase transforming protein fms (V-FMS) from Felidae (cat family).